The primary structure comprises 311 residues: Pyrimidine-specific ribonucleoside hydrolase RihA (311 aa).

The active site involves His240.

This sequence belongs to the IUNH family. RihA subfamily.

Its function is as follows. Hydrolyzes cytidine or uridine to ribose and cytosine or uracil, respectively. This is Pyrimidine-specific ribonucleoside hydrolase RihA from Salmonella arizonae (strain ATCC BAA-731 / CDC346-86 / RSK2980).